The chain runs to 148 residues: Small ribosomal subunit protein eS6 (148 aa).

Belongs to the eukaryotic ribosomal protein eS6 family.

The chain is Small ribosomal subunit protein eS6 from Pyrobaculum aerophilum (strain ATCC 51768 / DSM 7523 / JCM 9630 / CIP 104966 / NBRC 100827 / IM2).